We begin with the raw amino-acid sequence, 611 residues long: Pleckstrin homology domain-containing family N member 1 (611 aa).

The interval 1-45 (MGNSHCVPQAPRRLRASFSRKPSLKGNREDSARMSAGLPGPEAAR) is disordered. A lipid anchor (N-myristoyl glycine) is attached at Gly2. Residues 61–100 (TDILDLENQRENLEQPFLSVFKKGRRRVPVRNLGKVVHYA) form an interaction with C1QBP region. PH domains follow at residues 96–192 (VVHY…TALL) and 222–319 (AVCA…THRE). Tyr302 carries the phosphotyrosine modification. Disordered stretches follow at residues 323-424 (PLPG…PVTP), 438-468 (ESSP…TSHR), and 483-611 (MQSA…VQWI). Positions 341–350 (GSLSSGGQTS) are enriched in low complexity. A compositionally biased stretch (polar residues) spans 360–391 (STRTSHSLPESSVPSTVGCSSQHTPDQANSDR). Tyr456 is subject to Phosphotyrosine. Low complexity predominate over residues 498–509 (VPVSVPASDPRS). Ser559 carries the post-translational modification Phosphoserine. The segment covering 570 to 585 (RSPRRSRDPGYDHLWD) has biased composition (basic and acidic residues).

As to quaternary structure, found in a complex with cytochrome c mRNA and various ribosomal proteins. Interacts with C1QBP. Interacts with ELAVL1. Interacts with BID. Post-translationally, phosphorylation is essential for its mitochondrial localization and regulates its interaction with C1QBP. Ubiquitous. Epressed in several cancer cell lines of differing origin.

Its subcellular location is the cell membrane. The protein resides in the mitochondrion. It localises to the mitochondrion membrane. Its function is as follows. Controls the stability of the leptin mRNA harboring an AU-rich element (ARE) in its 3' UTR, in cooperation with the RNA stabilizer ELAVL1. Decreases the stability of the leptin mRNA by antagonizing the function of ELAVL1 by inducing its atypical recruitment from the nucleus to the cytosol. Binds to cardiolipin (CL), phosphatidic acid (PA), phosphatidylinositol 4-phosphate (PtdIns(4)P) and phosphatidylserine (PS). Promotes apoptosis by enhancing BAX-BAK hetero-oligomerization via interaction with BID in colon cancer cells. The protein is Pleckstrin homology domain-containing family N member 1 (PLEKHN1) of Homo sapiens (Human).